Here is a 188-residue protein sequence, read N- to C-terminus: Elongation factor P (188 aa).

Lys34 is subject to N6-(3,6-diaminohexanoyl)-5-hydroxylysine.

It belongs to the elongation factor P family. May be beta-lysylated on the epsilon-amino group of Lys-34 by the combined action of EpmA and EpmB, and then hydroxylated on the C5 position of the same residue by EpmC (if this protein is present). Lysylation is critical for the stimulatory effect of EF-P on peptide-bond formation. The lysylation moiety may extend toward the peptidyltransferase center and stabilize the terminal 3-CCA end of the tRNA. Hydroxylation of the C5 position on Lys-34 may allow additional potential stabilizing hydrogen-bond interactions with the P-tRNA.

It is found in the cytoplasm. It participates in protein biosynthesis; polypeptide chain elongation. Functionally, involved in peptide bond synthesis. Alleviates ribosome stalling that occurs when 3 or more consecutive Pro residues or the sequence PPG is present in a protein, possibly by augmenting the peptidyl transferase activity of the ribosome. Modification of Lys-34 is required for alleviation. This is Elongation factor P from Histophilus somni (strain 129Pt) (Haemophilus somnus).